Consider the following 281-residue polypeptide: Pantothenate synthetase (281 aa).

Position 31-38 (31-38 (MGNLHAGH)) interacts with ATP. Histidine 38 functions as the Proton donor in the catalytic mechanism. Glutamine 62 is a (R)-pantoate binding site. A beta-alanine-binding site is contributed by glutamine 62. Residue 150–153 (GKKD) coordinates ATP. Residue glutamine 156 participates in (R)-pantoate binding. ATP-binding positions include valine 179 and 187 to 190 (MSSR).

This sequence belongs to the pantothenate synthetase family. Homodimer.

The protein resides in the cytoplasm. It catalyses the reaction (R)-pantoate + beta-alanine + ATP = (R)-pantothenate + AMP + diphosphate + H(+). It participates in cofactor biosynthesis; (R)-pantothenate biosynthesis; (R)-pantothenate from (R)-pantoate and beta-alanine: step 1/1. In terms of biological role, catalyzes the condensation of pantoate with beta-alanine in an ATP-dependent reaction via a pantoyl-adenylate intermediate. The polypeptide is Pantothenate synthetase (Xylella fastidiosa (strain M12)).